The following is a 453-amino-acid chain: Methylenetetrahydrofolate--tRNA-(uracil-5-)-methyltransferase TrmFO (453 aa).

10-15 contributes to the FAD binding site; sequence GGGLAG. The tract at residues 433–453 is disordered; that stretch reads ELAPWIDSAPPTAVPAAPAAG. A compositionally biased stretch (low complexity) spans 441–453; the sequence is APPTAVPAAPAAG.

This sequence belongs to the MnmG family. TrmFO subfamily. Requires FAD as cofactor.

Its subcellular location is the cytoplasm. It carries out the reaction uridine(54) in tRNA + (6R)-5,10-methylene-5,6,7,8-tetrahydrofolate + NADH + H(+) = 5-methyluridine(54) in tRNA + (6S)-5,6,7,8-tetrahydrofolate + NAD(+). It catalyses the reaction uridine(54) in tRNA + (6R)-5,10-methylene-5,6,7,8-tetrahydrofolate + NADPH + H(+) = 5-methyluridine(54) in tRNA + (6S)-5,6,7,8-tetrahydrofolate + NADP(+). In terms of biological role, catalyzes the folate-dependent formation of 5-methyl-uridine at position 54 (M-5-U54) in all tRNAs. The polypeptide is Methylenetetrahydrofolate--tRNA-(uracil-5-)-methyltransferase TrmFO (Anaeromyxobacter dehalogenans (strain 2CP-1 / ATCC BAA-258)).